A 233-amino-acid polypeptide reads, in one-letter code: Large ribosomal subunit protein uL1 (233 aa).

The protein belongs to the universal ribosomal protein uL1 family. Part of the 50S ribosomal subunit.

In terms of biological role, binds directly to 23S rRNA. The L1 stalk is quite mobile in the ribosome, and is involved in E site tRNA release. Its function is as follows. Protein L1 is also a translational repressor protein, it controls the translation of the L11 operon by binding to its mRNA. The protein is Large ribosomal subunit protein uL1 of Thermotoga petrophila (strain ATCC BAA-488 / DSM 13995 / JCM 10881 / RKU-1).